Reading from the N-terminus, the 127-residue chain is Small ribosomal subunit protein uS11 (127 aa).

It belongs to the universal ribosomal protein uS11 family. Part of the 30S ribosomal subunit. Interacts with proteins S7 and S18. Binds to IF-3.

Its function is as follows. Located on the platform of the 30S subunit, it bridges several disparate RNA helices of the 16S rRNA. Forms part of the Shine-Dalgarno cleft in the 70S ribosome. This is Small ribosomal subunit protein uS11 from Ehrlichia ruminantium (strain Gardel).